A 189-amino-acid chain; its full sequence is Large ribosomal subunit protein bL9 (189 aa).

Belongs to the bacterial ribosomal protein bL9 family.

In terms of biological role, binds to the 23S rRNA. This chain is Large ribosomal subunit protein bL9, found in Beijerinckia indica subsp. indica (strain ATCC 9039 / DSM 1715 / NCIMB 8712).